A 432-amino-acid chain; its full sequence is 3-phosphoshikimate 1-carboxyvinyltransferase (432 aa).

3 residues coordinate 3-phosphoshikimate: K21, S22, and R26. K21 lines the phosphoenolpyruvate pocket. Positions 93 and 121 each coordinate phosphoenolpyruvate. 3-phosphoshikimate-binding residues include S166, Q168, D318, and K345. Q168 serves as a coordination point for phosphoenolpyruvate. D318 acts as the Proton acceptor in catalysis. Residues R349 and R391 each contribute to the phosphoenolpyruvate site.

It belongs to the EPSP synthase family. In terms of assembly, monomer.

It is found in the cytoplasm. It catalyses the reaction 3-phosphoshikimate + phosphoenolpyruvate = 5-O-(1-carboxyvinyl)-3-phosphoshikimate + phosphate. It participates in metabolic intermediate biosynthesis; chorismate biosynthesis; chorismate from D-erythrose 4-phosphate and phosphoenolpyruvate: step 6/7. In terms of biological role, catalyzes the transfer of the enolpyruvyl moiety of phosphoenolpyruvate (PEP) to the 5-hydroxyl of shikimate-3-phosphate (S3P) to produce enolpyruvyl shikimate-3-phosphate and inorganic phosphate. In Persephonella marina (strain DSM 14350 / EX-H1), this protein is 3-phosphoshikimate 1-carboxyvinyltransferase.